A 207-amino-acid polypeptide reads, in one-letter code: Anthranilate synthase component II (207 aa).

The Glutamine amidotransferase type-1 domain occupies 17-207 (RVLFVDNFDS…DVIRNFLAGL (191 aa)). Residue 66–68 (GPG) participates in L-glutamine binding. Cysteine 96 (nucleophile; for GATase activity) is an active-site residue. Position 146–147 (146–147 (SL)) interacts with L-glutamine. Residues histidine 187 and glutamate 189 contribute to the active site.

In terms of assembly, tetramer of two components I and two components II.

The catalysed reaction is chorismate + L-glutamine = anthranilate + pyruvate + L-glutamate + H(+). It functions in the pathway amino-acid biosynthesis; L-tryptophan biosynthesis; L-tryptophan from chorismate: step 1/5. This chain is Anthranilate synthase component II (trpG1), found in Haloarcula marismortui (strain ATCC 43049 / DSM 3752 / JCM 8966 / VKM B-1809) (Halobacterium marismortui).